The primary structure comprises 196 residues: uncharacterized protein (196 aa).

The protein belongs to the NAD(P)H dehydrogenase (quinone) family.

This is an uncharacterized protein from Escherichia coli (strain K12).